We begin with the raw amino-acid sequence, 217 residues long: Oxygen regulatory protein NreC (217 aa).

One can recognise a Response regulatory domain in the interval 2 to 119 (KIVIADDHAV…QLLLAIRTVY (118 aa)). D53 is modified (4-aspartylphosphate). One can recognise an HTH luxR-type domain in the interval 148–213 (TSDPFKILSK…ELVEYALKKK (66 aa)). The H-T-H motif DNA-binding region spans 172-191 (NKEIAEKLFVSVKTVEAHKT).

In terms of processing, phosphorylated by NreB.

The protein localises to the cytoplasm. Its function is as follows. Member of the two-component regulatory system NreB/NreC involved in the control of dissimilatory nitrate/nitrite reduction in response to oxygen. Phosphorylated NreC binds to a GC-rich palindromic sequence at the promoters of the nitrate (narGHJI) and nitrite (nir) reductase operons, as well as the putative nitrate transporter gene narT, and activates their expression. The sequence is that of Oxygen regulatory protein NreC (nreC) from Staphylococcus aureus (strain bovine RF122 / ET3-1).